A 957-amino-acid chain; its full sequence is Glycine dehydrogenase (decarboxylating) (957 aa).

The residue at position 708 (K708) is an N6-(pyridoxal phosphate)lysine.

This sequence belongs to the GcvP family. The glycine cleavage system is composed of four proteins: P, T, L and H. Pyridoxal 5'-phosphate is required as a cofactor.

It carries out the reaction N(6)-[(R)-lipoyl]-L-lysyl-[glycine-cleavage complex H protein] + glycine + H(+) = N(6)-[(R)-S(8)-aminomethyldihydrolipoyl]-L-lysyl-[glycine-cleavage complex H protein] + CO2. Functionally, the glycine cleavage system catalyzes the degradation of glycine. The P protein binds the alpha-amino group of glycine through its pyridoxal phosphate cofactor; CO(2) is released and the remaining methylamine moiety is then transferred to the lipoamide cofactor of the H protein. The polypeptide is Glycine dehydrogenase (decarboxylating) (Escherichia fergusonii (strain ATCC 35469 / DSM 13698 / CCUG 18766 / IAM 14443 / JCM 21226 / LMG 7866 / NBRC 102419 / NCTC 12128 / CDC 0568-73)).